The following is a 168-amino-acid chain: Chorismate pyruvate-lyase (168 aa).

Residues methionine 36, arginine 78, leucine 116, and glutamate 157 each coordinate substrate.

It belongs to the UbiC family. Monomer.

Its subcellular location is the cytoplasm. It catalyses the reaction chorismate = 4-hydroxybenzoate + pyruvate. It participates in cofactor biosynthesis; ubiquinone biosynthesis. Its function is as follows. Removes the pyruvyl group from chorismate, with concomitant aromatization of the ring, to provide 4-hydroxybenzoate (4HB) for the ubiquinone pathway. This chain is Chorismate pyruvate-lyase, found in Photorhabdus laumondii subsp. laumondii (strain DSM 15139 / CIP 105565 / TT01) (Photorhabdus luminescens subsp. laumondii).